Reading from the N-terminus, the 251-residue chain is Triosephosphate isomerase (251 aa).

Residue 9-11 (NWK) coordinates substrate. Histidine 95 acts as the Electrophile in catalysis. Catalysis depends on glutamate 167, which acts as the Proton acceptor. Residues glycine 173, serine 213, and 234–235 (GG) contribute to the substrate site.

Belongs to the triosephosphate isomerase family. In terms of assembly, homodimer.

The protein resides in the cytoplasm. It carries out the reaction D-glyceraldehyde 3-phosphate = dihydroxyacetone phosphate. It functions in the pathway carbohydrate biosynthesis; gluconeogenesis. It participates in carbohydrate degradation; glycolysis; D-glyceraldehyde 3-phosphate from glycerone phosphate: step 1/1. In terms of biological role, involved in the gluconeogenesis. Catalyzes stereospecifically the conversion of dihydroxyacetone phosphate (DHAP) to D-glyceraldehyde-3-phosphate (G3P). In Latilactobacillus sakei subsp. sakei (strain 23K) (Lactobacillus sakei subsp. sakei), this protein is Triosephosphate isomerase.